The chain runs to 380 residues: S-adenosylmethionine synthase (380 aa).

Histidine 15 provides a ligand contact to ATP. Aspartate 17 contacts Mg(2+). Glutamate 43 is a binding site for K(+). L-methionine is bound by residues glutamate 56 and glutamine 99. The segment at 99–109 (QSPDIAMGIDN) is flexible loop. ATP-binding positions include 164-166 (DAK), 230-231 (RF), aspartate 239, 245-246 (RK), and lysine 266. Residue aspartate 239 participates in L-methionine binding. Residue lysine 270 coordinates L-methionine.

This sequence belongs to the AdoMet synthase family. In terms of assembly, homotetramer; dimer of dimers. Mg(2+) serves as cofactor. The cofactor is K(+).

It is found in the cytoplasm. It carries out the reaction L-methionine + ATP + H2O = S-adenosyl-L-methionine + phosphate + diphosphate. Its pathway is amino-acid biosynthesis; S-adenosyl-L-methionine biosynthesis; S-adenosyl-L-methionine from L-methionine: step 1/1. Its function is as follows. Catalyzes the formation of S-adenosylmethionine (AdoMet) from methionine and ATP. The overall synthetic reaction is composed of two sequential steps, AdoMet formation and the subsequent tripolyphosphate hydrolysis which occurs prior to release of AdoMet from the enzyme. In Rickettsia prowazekii (strain Madrid E), this protein is S-adenosylmethionine synthase.